Reading from the N-terminus, the 90-residue chain is UPF0297 protein ABC1593 (90 aa).

This sequence belongs to the UPF0297 family.

This chain is UPF0297 protein ABC1593, found in Shouchella clausii (strain KSM-K16) (Alkalihalobacillus clausii).